An 85-amino-acid polypeptide reads, in one-letter code: Putative membrane protein insertion efficiency factor (85 aa).

Belongs to the UPF0161 family.

The protein resides in the cell inner membrane. In terms of biological role, could be involved in insertion of integral membrane proteins into the membrane. This is Putative membrane protein insertion efficiency factor from Tolumonas auensis (strain DSM 9187 / NBRC 110442 / TA 4).